A 555-amino-acid polypeptide reads, in one-letter code: Vacuolar fusion protein MON1 homolog A (555 aa).

Positions 1–12 are enriched in basic and acidic residues; that stretch reads MAADMQRKRSSE. The segment at 1 to 90 is disordered; sequence MAADMQRKRS…PPLATDMRQI (90 aa). Ser31 and Ser56 each carry phosphoserine. The residue at position 61 (Thr61) is a Phosphothreonine. Residue Ser91 is modified to Phosphoserine. A disordered region spans residues 112 to 149; the sequence is MLPGSSEDWPESPGAARRPATEPPRDGAGEGDEEEAAE. The span at 130 to 139 shows a compositional bias: basic and acidic residues; it reads PATEPPRDGA.

The protein belongs to the MON1/SAND family. Interacts with CCZ1. Found in a complex with RMC1, CCZ1, MON1A and MON1B. The MON1A-CCZ1B complex interacts with RIMOC1. The MON1A-CCZ1B complex interacts with RAB7A and this interaction is enhanced in the presence of RIMOC1.

Plays an important role in membrane trafficking through the secretory apparatus. Not involved in endocytic trafficking to lysosomes. Acts in concert with CCZ1, as a guanine exchange factor (GEF) for RAB7, promotes the exchange of GDP to GTP, converting it from an inactive GDP-bound form into an active GTP-bound form. The sequence is that of Vacuolar fusion protein MON1 homolog A (MON1A) from Bos taurus (Bovine).